The sequence spans 311 residues: S-adenosyl-L-methionine-dependent tRNA 4-demethylwyosine synthase (311 aa).

[4Fe-4S] cluster contacts are provided by Cys-26, Cys-39, Cys-52, Cys-62, Cys-66, and Cys-69. The Radical SAM core domain occupies 45 to 283 (YGIETHRCIQ…LKLAKMLDEN (239 aa)).

This sequence belongs to the TYW1 family. As to quaternary structure, monomer. The cofactor is [4Fe-4S] cluster.

It is found in the cytoplasm. It catalyses the reaction N(1)-methylguanosine(37) in tRNA(Phe) + pyruvate + S-adenosyl-L-methionine = 4-demethylwyosine(37) in tRNA(Phe) + 5'-deoxyadenosine + L-methionine + CO2 + H2O. Functionally, component of the wyosine derivatives biosynthesis pathway that catalyzes the condensation of N-methylguanine with 2 carbon atoms from pyruvate to form the tricyclic 4-demethylwyosine (imG-14) on guanosine-37 of tRNA(Phe). This chain is S-adenosyl-L-methionine-dependent tRNA 4-demethylwyosine synthase, found in Methanocaldococcus jannaschii (strain ATCC 43067 / DSM 2661 / JAL-1 / JCM 10045 / NBRC 100440) (Methanococcus jannaschii).